The primary structure comprises 179 residues: uncharacterized protein (179 aa).

4 consecutive transmembrane segments (helical) span residues 9 to 31, 41 to 63, 114 to 136, and 146 to 168; these read WILV…VSTL, AFLL…YGSF, AYYG…LLGA, and AFWG…NYLM.

The protein localises to the cell membrane. This is an uncharacterized protein from Aquifex aeolicus (strain VF5).